We begin with the raw amino-acid sequence, 713 residues long: Probable muscarinic acetylcholine receptor gar-1 (713 aa).

At 1-20 (MPNYTVPPDPADTSWDSPYS) the chain is on the extracellular side. A glycan (N-linked (GlcNAc...) asparagine) is linked at Asn-3. A helical transmembrane segment spans residues 21 to 41 (IPVQIVVWIIIIVLSLETIIG). The Cytoplasmic portion of the chain corresponds to 42–66 (NAMVVMAYRIERNISKQVSNRYIVS). A helical transmembrane segment spans residues 67 to 87 (LAISDLIIGIEGFPFFTVYVL). Residues 88–101 (NGDRWPLGWVACQT) are Extracellular-facing. Cys-99 and Cys-180 are disulfide-bonded. A helical transmembrane segment spans residues 102 to 122 (WLFLDYTLCLVSILTVLLITA). Over 123-144 (DRYLSVCHTAKYLKWQSPTKTQ) the chain is Cytoplasmic. A helical transmembrane segment spans residues 145 to 165 (LLIVMSWLLPAIIFGIMIYGW). Residues 166-189 (QAMTGQSTSMSGAECSAPFLSNPY) are Extracellular-facing. A helical transmembrane segment spans residues 190 to 210 (VNMGMYVAYYWTTLVAMLILY). At 211 to 633 (KGIHQAAKNL…QTKAEKRAHK (423 aa)) the chain is on the cytoplasmic side. Disordered regions lie at residues 256–350 (KEKA…SRRC), 381–403 (SRYSASESITTTHENDEKEVEKA), 427–475 (KNTD…KQAE), and 515–585 (LIRR…TDTF). Polar residues-rich tracts occupy residues 266–275 (SGYTSNQAGD) and 287–315 (PETSQFRVDPNSNNNLNVEGSLNTENDQN). 2 stretches are compositionally biased toward basic and acidic residues: residues 320–333 (EEERSGFLSRRESN) and 393–403 (HENDEKEVEKA). Residues 429–439 (TDSNNDSDTTS) show a composition bias toward low complexity. The segment covering 444 to 457 (RSRKYKKNKRPRSS) has biased composition (basic residues). Over residues 557–571 (LTVNNENRGETSSQP) the composition is skewed to polar residues. Residues 634 to 656 (AFRTITFIVGFFAILWSPYYIMA) form a helical membrane-spanning segment. At 657–670 (TVYGFCKGECIPSF) the chain is on the extracellular side. Residues 671–693 (LYTLSYYMCYLNSSGNPFAYALA) form a helical membrane-spanning segment. Residues 694–713 (NRQFRSAFMRMFRGNFNKVA) lie on the Cytoplasmic side of the membrane.

The protein belongs to the G-protein coupled receptor 1 family. Muscarinic acetylcholine receptor subfamily. As to expression, expressed in head region of the larva. In adults, expression is seen in the periventricularis magnocellularis (PVM) neuron.

The protein resides in the cell membrane. In terms of biological role, the muscarinic acetylcholine receptor mediates various cellular responses, including inhibition of adenylate cyclase, breakdown of phosphoinositides and modulation of potassium channels through the action of G proteins. Primary transducing effect is Pi turnover. This Caenorhabditis elegans protein is Probable muscarinic acetylcholine receptor gar-1 (gar-1).